A 238-amino-acid polypeptide reads, in one-letter code: Large ribosomal subunit protein uL2 (238 aa).

The interval 199 to 238 (PHGGGLHQSVSRPSTVSRNAPPGRKVGHIAARRTGRKEGA) is disordered. Over residues 206–216 (QSVSRPSTVSR) the composition is skewed to polar residues. The segment covering 223 to 238 (KVGHIAARRTGRKEGA) has biased composition (basic residues).

It belongs to the universal ribosomal protein uL2 family. As to quaternary structure, part of the 50S ribosomal subunit. Forms a bridge to the 30S subunit in the 70S ribosome.

One of the primary rRNA binding proteins. Required for association of the 30S and 50S subunits to form the 70S ribosome, for tRNA binding and peptide bond formation. It has been suggested to have peptidyltransferase activity; this is somewhat controversial. Makes several contacts with the 16S rRNA in the 70S ribosome. This is Large ribosomal subunit protein uL2 from Sulfurisphaera tokodaii (strain DSM 16993 / JCM 10545 / NBRC 100140 / 7) (Sulfolobus tokodaii).